The chain runs to 309 residues: Protein-L-isoaspartate O-methyltransferase (309 aa).

Residues 1 to 46 (MSGERAKRFPLALEDLKRAPRKSDGRAGERHAAIAAPKAADKPAAV) are disordered. The segment covering 14–32 (EDLKRAPRKSDGRAGERHA) has biased composition (basic and acidic residues). Over residues 33-46 (AIAAPKAADKPAAV) the composition is skewed to low complexity. Ser-156 is a catalytic residue.

The protein belongs to the methyltransferase superfamily. L-isoaspartyl/D-aspartyl protein methyltransferase family.

Its subcellular location is the cytoplasm. The enzyme catalyses [protein]-L-isoaspartate + S-adenosyl-L-methionine = [protein]-L-isoaspartate alpha-methyl ester + S-adenosyl-L-homocysteine. Catalyzes the methyl esterification of L-isoaspartyl residues in peptides and proteins that result from spontaneous decomposition of normal L-aspartyl and L-asparaginyl residues. It plays a role in the repair and/or degradation of damaged proteins. The sequence is that of Protein-L-isoaspartate O-methyltransferase from Burkholderia vietnamiensis (strain G4 / LMG 22486) (Burkholderia cepacia (strain R1808)).